Reading from the N-terminus, the 153-residue chain is UPF0158 protein PA5073 (153 aa).

The protein belongs to the UPF0158 family.

The protein is UPF0158 protein PA5073 of Pseudomonas aeruginosa (strain ATCC 15692 / DSM 22644 / CIP 104116 / JCM 14847 / LMG 12228 / 1C / PRS 101 / PAO1).